A 434-amino-acid chain; its full sequence is Calcium uptake protein 2, mitochondrial (434 aa).

The transit peptide at 1-22 (MAAAAGSCARVAAWGGKLRRGL) directs the protein to the mitochondrion. Residues 172–207 (KPHSGFHVAFKMLDTDGNEMIEKREFFKLQKIISKQ) enclose the EF-hand 1 domain. Residues D185, D187, N189, M191, E193, and E196 each contribute to the Ca(2+) site. Position 205 is a phosphoserine (S205). The 36-residue stretch at 227 to 262 (EPEINTTLQMRFFGKRGQRKLHYKEFRRFMENLQTE) folds into the EF-hand 2; degenerate domain. The region spanning 293–328 (TENKDIYWKNVREKLSAGESISLDEFKSFCHFTTHL) is the EF-hand 3; degenerate domain. The 36-residue stretch at 362–397 (LSNNILDTVFKIFDLDGDECLSHEEFLGVLKNRMHR) folds into the EF-hand 4 domain. Ca(2+)-binding residues include D375, D377, D379, C381, and E386.

Belongs to the MICU1 family. MICU2 subfamily. As to quaternary structure, heterodimer; disulfide-linked; heterodimerizes with MICU1. Component of the uniplex complex, composed of MCU, EMRE/SMDT1, MICU1 and MICU2 in a 4:4:1:1 stoichiometry.

The protein resides in the mitochondrion intermembrane space. It is found in the mitochondrion inner membrane. In terms of biological role, calcium sensor of the mitochondrial calcium uniporter (MCU) channel, which senses calcium level via its EF-hand domains. MICU1 and MICU2 form a disulfide-linked heterodimer that stimulates and inhibits MCU activity, depending on the concentration of calcium. At low calcium levels, MICU1 occludes the pore of the MCU channel, preventing mitochondrial calcium uptake. At higher calcium levels, calcium-binding to MICU1 and MICU2 induces a conformational change that weakens MCU-MICU1 interactions and moves the MICU1-MICU2 heterodimer away from the pore, allowing calcium permeation through the MCU channel. This is Calcium uptake protein 2, mitochondrial from Homo sapiens (Human).